Here is a 711-residue protein sequence, read N- to C-terminus: Polyribonucleotide nucleotidyltransferase (711 aa).

The tract at residues phenylalanine 77–arginine 80 is FFRR loop; important for RNA binding. The interval leucine 327 to threonine 331 is interaction with RNase E. Residues aspartate 486 and aspartate 492 each coordinate Mg(2+). The KH domain occupies proline 553–isoleucine 612. The S1 motif domain occupies glycine 622–lysine 690. The segment at isoleucine 689 to glutamate 711 is disordered. Over residues glutamate 694–glutamate 711 the composition is skewed to low complexity.

Belongs to the polyribonucleotide nucleotidyltransferase family. As to quaternary structure, component of the RNA degradosome, which is a multiprotein complex involved in RNA processing and mRNA degradation. Interacts with RNase E (rne). Homotrimer. The homotrimer forms a ring-like structure with a central channel, where RNA molecules can bind. RNA molecules bind between neighboring subunits. Might interact with YicC. Mg(2+) serves as cofactor. Requires Mn(2+) as cofactor.

It localises to the cytoplasm. It carries out the reaction RNA(n+1) + phosphate = RNA(n) + a ribonucleoside 5'-diphosphate. Involved in mRNA degradation. Catalyzes the phosphorolysis of single-stranded polyribonucleotides processively in the 3'- to 5'-direction. Also involved, along with RNase II, in tRNA processing. RNases II and R contribute to rRNA degradation during starvation, while RNase R and PNPase are the major contributors to quality control of rRNA during steady state growth. Contributes to degradation of some small RNAs (sRNA). This is Polyribonucleotide nucleotidyltransferase from Escherichia coli (strain K12).